The primary structure comprises 244 residues: Eukaryotic translation initiation factor 6 (244 aa).

2 positions are modified to phosphoserine; by CK1: Ser-174 and Ser-175.

This sequence belongs to the eIF-6 family. In terms of assembly, monomer. Associates with the 60S ribosomal subunit. Post-translationally, phosphorylation at Ser-174 and Ser-175 promotes nuclear export.

It localises to the cytoplasm. The protein localises to the nucleus. It is found in the nucleolus. In terms of biological role, binds to the 60S ribosomal subunit and prevents its association with the 40S ribosomal subunit to form the 80S initiation complex in the cytoplasm. Is also involved in ribosome biogenesis. Associates with pre-60S subunits in the nucleus and is involved in its nuclear export. This chain is Eukaryotic translation initiation factor 6 (tif6), found in Schizosaccharomyces pombe (strain 972 / ATCC 24843) (Fission yeast).